Consider the following 309-residue polypeptide: 4-hydroxy-3-methylbut-2-enyl diphosphate reductase (309 aa).

Position 12 (Cys12) interacts with [4Fe-4S] cluster. Positions 41 and 74 each coordinate (2E)-4-hydroxy-3-methylbut-2-enyl diphosphate. 2 residues coordinate dimethylallyl diphosphate: His41 and His74. Positions 41 and 74 each coordinate isopentenyl diphosphate. Residue Cys96 participates in [4Fe-4S] cluster binding. His124 provides a ligand contact to (2E)-4-hydroxy-3-methylbut-2-enyl diphosphate. His124 is a binding site for dimethylallyl diphosphate. Residue His124 coordinates isopentenyl diphosphate. Glu126 functions as the Proton donor in the catalytic mechanism. Position 167 (Thr167) interacts with (2E)-4-hydroxy-3-methylbut-2-enyl diphosphate. Cys197 contributes to the [4Fe-4S] cluster binding site. Ser225, Ser226, Asn227, and Ser269 together coordinate (2E)-4-hydroxy-3-methylbut-2-enyl diphosphate. Residues Ser225, Ser226, Asn227, and Ser269 each contribute to the dimethylallyl diphosphate site. Residues Ser225, Ser226, Asn227, and Ser269 each contribute to the isopentenyl diphosphate site.

It belongs to the IspH family. The cofactor is [4Fe-4S] cluster.

It catalyses the reaction isopentenyl diphosphate + 2 oxidized [2Fe-2S]-[ferredoxin] + H2O = (2E)-4-hydroxy-3-methylbut-2-enyl diphosphate + 2 reduced [2Fe-2S]-[ferredoxin] + 2 H(+). The enzyme catalyses dimethylallyl diphosphate + 2 oxidized [2Fe-2S]-[ferredoxin] + H2O = (2E)-4-hydroxy-3-methylbut-2-enyl diphosphate + 2 reduced [2Fe-2S]-[ferredoxin] + 2 H(+). Its pathway is isoprenoid biosynthesis; dimethylallyl diphosphate biosynthesis; dimethylallyl diphosphate from (2E)-4-hydroxy-3-methylbutenyl diphosphate: step 1/1. It functions in the pathway isoprenoid biosynthesis; isopentenyl diphosphate biosynthesis via DXP pathway; isopentenyl diphosphate from 1-deoxy-D-xylulose 5-phosphate: step 6/6. In terms of biological role, catalyzes the conversion of 1-hydroxy-2-methyl-2-(E)-butenyl 4-diphosphate (HMBPP) into a mixture of isopentenyl diphosphate (IPP) and dimethylallyl diphosphate (DMAPP). Acts in the terminal step of the DOXP/MEP pathway for isoprenoid precursor biosynthesis. The sequence is that of 4-hydroxy-3-methylbut-2-enyl diphosphate reductase from Shewanella pealeana (strain ATCC 700345 / ANG-SQ1).